The chain runs to 295 residues: Cbb3-type cytochrome c oxidase subunit CcoP (295 aa).

Residues 1–31 (MAQKEKDALSGVETTGHEWDGLRELNNPLPK) are Cytoplasmic-facing. A helical membrane pass occupies residues 32–52 (WWLYIFYVCIAWSLVYYVLYP). The Periplasmic segment spans residues 53–295 (AWPLGKSYTK…VYVHNLGGGK (243 aa)). Cytochrome c domains follow at residues 108-200 (FAMA…LSLN) and 207-292 (AAAE…HNLG). Heme c is bound by residues Cys121, Cys124, His125, Met175, Cys220, Cys223, His224, and Met269.

The protein belongs to the CcoP / FixP family. As to quaternary structure, component of the cbb3-type cytochrome c oxidase at least composed of CcoN, CcoO, CcoQ and CcoP. Requires heme c as cofactor.

Its subcellular location is the cell inner membrane. It functions in the pathway energy metabolism; oxidative phosphorylation. C-type cytochrome. Part of the cbb3-type cytochrome c oxidase complex. CcoP subunit is required for transferring electrons from donor cytochrome c via its heme groups to CcoO subunit. From there, electrons are shuttled to the catalytic binuclear center of CcoN subunit where oxygen reduction takes place. The complex also functions as a proton pump. The chain is Cbb3-type cytochrome c oxidase subunit CcoP from Azospirillum brasilense.